The primary structure comprises 240 residues: Keratinocyte-associated protein 3 (240 aa).

Transmembrane regions (helical) follow at residues 21–41 (VGLA…VLHG), 63–83 (VISV…LLAS), 95–115 (LLTL…GLLL), and 163–183 (ALAL…LSGY).

Belongs to the TMEM54 family.

It localises to the membrane. The protein is Keratinocyte-associated protein 3 (Krtcap3) of Mus musculus (Mouse).